A 264-amino-acid chain; its full sequence is Cell division protein DivIB (264 aa).

Over 1 to 23 (MAVYEERIPQVKQQRPRRRGNRK) the chain is Cytoplasmic. The helical transmembrane segment at 24 to 44 (LVFLLVLFFLTILIIVFIRSP) threads the bilayer. At 45–264 (YSKVQEIRVT…GQEQPQQPQQ (220 aa)) the chain is on the extracellular side. Residues 46–114 (SKVQEIRVTG…GLITLHITEQ (69 aa)) form the POTRA domain.

It belongs to the FtsQ/DivIB family. DivIB subfamily.

Its subcellular location is the cell membrane. Functionally, cell division protein that may be involved in stabilizing or promoting the assembly of the division complex. The polypeptide is Cell division protein DivIB (Brevibacillus brevis (strain 47 / JCM 6285 / NBRC 100599)).